The primary structure comprises 342 residues: Heat-inducible transcription repressor HrcA (342 aa).

Belongs to the HrcA family.

Negative regulator of class I heat shock genes (grpE-dnaK-dnaJ and groELS operons). Prevents heat-shock induction of these operons. In Dechloromonas aromatica (strain RCB), this protein is Heat-inducible transcription repressor HrcA.